A 328-amino-acid chain; its full sequence is RING finger protein 175 (328 aa).

A run of 5 helical transmembrane segments spans residues 51–71 (MHVE…IVLV), 83–103 (LVTL…LYWW), 104–121 (RFLS…YILF), 149–169 (AFGV…NLFF), and 180–200 (GIVS…FAEI). The segment at 227 to 277 (CAVCGQKIIVELDEEGLIENTYQLSCNHVFHEFCIRGWCIVGKKQTCPYCK) adopts an RING-type; atypical zinc-finger fold.

It is found in the membrane. In Homo sapiens (Human), this protein is RING finger protein 175 (RNF175).